The sequence spans 552 residues: Steroid transmembrane transporter SLC22A24 (552 aa).

The next 12 helical transmembrane spans lie at 16–36 (FQIL…PHIL), 146–166 (SVVQ…FGYL), 174–194 (MICS…AFAP), 204–224 (FLAG…VIEW), 235–255 (TLLL…AFVI), 260–280 (TLQL…RWLV), 349–369 (IVLY…GLIF), 380–400 (LFQV…LLVM), 407–427 (ISQV…TFLD), 436–456 (ILAT…SVHF), 473–493 (ILFS…VGFS), and 495–515 (YLPW…VLLL).

It belongs to the major facilitator (TC 2.A.1) superfamily. Organic cation transporter (TC 2.A.1.19) family.

Its subcellular location is the cell membrane. It carries out the reaction estrone 3-sulfate(out) + glutarate(in) = estrone 3-sulfate(in) + glutarate(out). It catalyses the reaction 17beta-estradiol 17-O-(beta-D-glucuronate)(out) + glutarate(in) = 17beta-estradiol 17-O-(beta-D-glucuronate)(in) + glutarate(out). The catalysed reaction is 5alpha-androstane-3alpha,17beta-diol 3-O-(beta-D-glucuronate)(out) + glutarate(in) = 5alpha-androstane-3alpha,17beta-diol 3-O-(beta-D-glucuronate)(in) + glutarate(out). The enzyme catalyses dehydroepiandrosterone 3-sulfate(out) + glutarate(in) = dehydroepiandrosterone 3-sulfate(in) + glutarate(out). It carries out the reaction glutarate(in) + succinate(out) = glutarate(out) + succinate(in). Its function is as follows. Renal transmembrane organic anion/dicarboxylate exchanger that participates in the reabsorption of conjugated steroids, as well as bile acids, driven by an outward gradient of dicarboxylates such as glutarate or succinate. Transports androstanediol glucuronide (5alpha-androstane-3alpha,17beta-diol 3-O-(beta-D-glucuronate)), estrone 3-sulfate, and estradiol-17-glucuronide (17beta-estradiol 17-O-(beta-D-glucuronate)), but not taurocholate. This is Steroid transmembrane transporter SLC22A24 from Microcebus murinus (Gray mouse lemur).